A 527-amino-acid chain; its full sequence is Flagellar radial spoke protein 5 (527 aa).

A disordered region spans residues M1 to N22. Positions R101 to F153 form a coiled coil. Asymmetric dimethylarginine is present on residues R191 and R366.

The protein belongs to the aldo/keto reductase family. In terms of processing, asymmetrically dimethylated at Arg-191 and Arg-366 during flagellum resorption. Probably methylated by PRMT1.

The protein localises to the cytoplasm. It is found in the cytoskeleton. It localises to the flagellum axoneme. Flagellar radial spokes contribute to the regulation of dynein arm activity and thus the pattern of flagellar bending. They consist of a thin stalk, which is attached to the a subfiber of the outer doublet microtubule, and a bulbous head, which is attached to the stalk and appears to interact with the projections from the central pair of microtubules. This chain is Flagellar radial spoke protein 5, found in Chlamydomonas reinhardtii (Chlamydomonas smithii).